We begin with the raw amino-acid sequence, 291 residues long: BTB/POZ domain-containing protein 19 (291 aa).

Residues 29–98 form the BTB domain; that stretch reads SDVRFVVGQE…LYTNSAKLQR (70 aa). Positions 134 to 234 constitute a BACK domain; sequence CEALQVAVTF…LALLAPAELS (101 aa).

The chain is BTB/POZ domain-containing protein 19 (BTBD19) from Bos taurus (Bovine).